Here is a 722-residue protein sequence, read N- to C-terminus: Polyribonucleotide nucleotidyltransferase (722 aa).

Residues Asp-487 and Asp-493 each contribute to the Mg(2+) site. Positions 554 to 613 (PRIETFKIPTDKIREVIGTGGKVIREIVEKTGAKVNIEDDGTVKVASSDGESIKAAIKWI) constitute a KH domain. An S1 motif domain is found at 623-691 (GEIYEGTVVK…DRGKTRLSMK (69 aa)). The interval 697-722 (TGEDLEAKQKAEAKAEGEAPAQAAGE) is disordered. The segment covering 701 to 713 (LEAKQKAEAKAEG) has biased composition (basic and acidic residues).

This sequence belongs to the polyribonucleotide nucleotidyltransferase family. It depends on Mg(2+) as a cofactor.

Its subcellular location is the cytoplasm. It carries out the reaction RNA(n+1) + phosphate = RNA(n) + a ribonucleoside 5'-diphosphate. In terms of biological role, involved in mRNA degradation. Catalyzes the phosphorolysis of single-stranded polyribonucleotides processively in the 3'- to 5'-direction. This chain is Polyribonucleotide nucleotidyltransferase, found in Rhodopseudomonas palustris (strain ATCC BAA-98 / CGA009).